Here is a 550-residue protein sequence, read N- to C-terminus: Lariat debranching enzyme (550 aa).

A divalent metal cation is bound by residues cysteine 8 and histidine 10. A Phosphoserine modification is found at serine 28. Residues aspartate 39 and asparagine 84 each contribute to the a divalent metal cation site. The segment at 124–154 is lariat recognition loop; it reads SGIFKSHDYRKGHFECPPYNSSTIRSIYHVR. Lysine 128 carries the N6-acetyllysine modification. Positions 174, 226, and 228 each coordinate a divalent metal cation. The segment at 390–550 is disordered; the sequence is EHHQCGEYEQ…AVDDGDASAE (161 aa). Residues 416–426 show a composition bias toward polar residues; that stretch reads NTDTSALSSIN. Acidic residues predominate over residues 430-445; the sequence is IMLDEEEEEEEEEEEA. Residues 450–483 are compositionally biased toward polar residues; sequence SDMNTPSVEPASDQASDLSTSFSDIRNLPSSMFV. Phosphoserine is present on residues serine 470, serine 480, serine 484, serine 485, serine 489, serine 491, serine 494, serine 505, and serine 520. Over residues 498–528 the composition is skewed to basic and acidic residues; the sequence is KCGETVESGDEKDLAKFPLKRLSDEHEPEQR.

This sequence belongs to the lariat debranching enzyme family. It depends on Fe(2+) as a cofactor. Zn(2+) is required as a cofactor. The cofactor is Mn(2+).

It is found in the nucleus. With respect to regulation, active in presence of diverse metals including Fe(2+), Zn(2+), Mn(2+). Also activated by Ca(2+). Binds two metal cations in two adjacent alpha and beta metal-binding pockets. In terms of biological role, cleaves the 2'-5' phosphodiester linkage at the branch point of excised lariat intron RNA and converts them into linear molecules that can be subsequently degraded, thereby facilitating ribonucleotide turnover. Linked to its role in pre-mRNA processing mechanism, may also participate in retrovirus replication and have an antiviral cell-intrinsic defense function. The sequence is that of Lariat debranching enzyme (Dbr1) from Mus musculus (Mouse).